The sequence spans 260 residues: Hydroxyethylthiazole kinase 1 (260 aa).

Methionine 39 lines the substrate pocket. Residues arginine 115 and threonine 160 each contribute to the ATP site. Glycine 187 contacts substrate.

It belongs to the Thz kinase family. Mg(2+) is required as a cofactor.

The catalysed reaction is 5-(2-hydroxyethyl)-4-methylthiazole + ATP = 4-methyl-5-(2-phosphooxyethyl)-thiazole + ADP + H(+). It participates in cofactor biosynthesis; thiamine diphosphate biosynthesis; 4-methyl-5-(2-phosphoethyl)-thiazole from 5-(2-hydroxyethyl)-4-methylthiazole: step 1/1. Catalyzes the phosphorylation of the hydroxyl group of 4-methyl-5-beta-hydroxyethylthiazole (THZ). In Streptococcus pneumoniae serotype 4 (strain ATCC BAA-334 / TIGR4), this protein is Hydroxyethylthiazole kinase 1.